We begin with the raw amino-acid sequence, 231 residues long: 7-cyano-7-deazaguanine synthase (231 aa).

8-18 (FSGGQDSTTCL) serves as a coordination point for ATP. Residues cysteine 188, cysteine 197, cysteine 200, and cysteine 203 each contribute to the Zn(2+) site.

Belongs to the QueC family. Zn(2+) serves as cofactor.

The enzyme catalyses 7-carboxy-7-deazaguanine + NH4(+) + ATP = 7-cyano-7-deazaguanine + ADP + phosphate + H2O + H(+). The protein operates within purine metabolism; 7-cyano-7-deazaguanine biosynthesis. Its function is as follows. Catalyzes the ATP-dependent conversion of 7-carboxy-7-deazaguanine (CDG) to 7-cyano-7-deazaguanine (preQ(0)). This Escherichia coli O127:H6 (strain E2348/69 / EPEC) protein is 7-cyano-7-deazaguanine synthase.